The chain runs to 420 residues: S-adenosylmethionine synthase (420 aa).

Histidine 16 provides a ligand contact to ATP. Aspartate 18 is a binding site for Mg(2+). Glutamate 44 is a K(+) binding site. The L-methionine site is built by glutamate 57 and glutamine 100. Residues 100-110 are flexible loop; that stretch reads QSADIAQGVDK. Residues 175-177, 251-252, aspartate 260, 266-267, alanine 283, and lysine 287 contribute to the ATP site; these read DGK, KF, and RK. Residue aspartate 260 participates in L-methionine binding. Lysine 291 is an L-methionine binding site.

This sequence belongs to the AdoMet synthase family. As to quaternary structure, homotetramer; dimer of dimers. It depends on Mg(2+) as a cofactor. The cofactor is K(+).

It localises to the cytoplasm. It catalyses the reaction L-methionine + ATP + H2O = S-adenosyl-L-methionine + phosphate + diphosphate. The protein operates within amino-acid biosynthesis; S-adenosyl-L-methionine biosynthesis; S-adenosyl-L-methionine from L-methionine: step 1/1. In terms of biological role, catalyzes the formation of S-adenosylmethionine (AdoMet) from methionine and ATP. The overall synthetic reaction is composed of two sequential steps, AdoMet formation and the subsequent tripolyphosphate hydrolysis which occurs prior to release of AdoMet from the enzyme. The sequence is that of S-adenosylmethionine synthase from Trichodesmium erythraeum (strain IMS101).